A 238-amino-acid chain; its full sequence is MAKKLSRRLREALEKVEDRAYEPLEALTLLKETATAKFDETAEAHIRLGIDPKYTDQQLRTTVAFPKGTGQSVRVAVITSGEQVKVAEESGADLVGSEELIEDIQKGMMDFEVLIATPDMMPKVARLGRQLGPRGLMPSPKGGTVTTDVATAIAAFKAGKQEFRADRAGIVHVLFGKSSFAAEDLLVNLKALQETIDRNRPSGAKGRYWRSIYVSASMGPSIQVDINALRDLFIEEKA.

Belongs to the universal ribosomal protein uL1 family. Part of the 50S ribosomal subunit.

Functionally, binds directly to 23S rRNA. The L1 stalk is quite mobile in the ribosome, and is involved in E site tRNA release. Its function is as follows. Protein L1 is also a translational repressor protein, it controls the translation of the L11 operon by binding to its mRNA. In Picosynechococcus sp. (strain ATCC 27264 / PCC 7002 / PR-6) (Agmenellum quadruplicatum), this protein is Large ribosomal subunit protein uL1.